The chain runs to 59 residues: Sec-independent protein translocase protein TatA (59 aa).

Residues 1–21 traverse the membrane as a helical segment; it reads MFSNIGFPGLILILVAVLILF.

This sequence belongs to the TatA/E family. As to quaternary structure, forms a complex with TatC.

It is found in the cell membrane. Its function is as follows. Part of the twin-arginine translocation (Tat) system that transports large folded proteins containing a characteristic twin-arginine motif in their signal peptide across membranes. TatA could form the protein-conducting channel of the Tat system. The sequence is that of Sec-independent protein translocase protein TatA from Bacillus mycoides (strain KBAB4) (Bacillus weihenstephanensis).